A 351-amino-acid polypeptide reads, in one-letter code: Glycerol-3-phosphate dehydrogenase [NAD(P)+] (351 aa).

4 residues coordinate NADPH: Ser-18, Trp-19, Arg-38, and Lys-122. Residues Lys-122, Gly-153, and Ser-155 each coordinate sn-glycerol 3-phosphate. Residue Ala-157 coordinates NADPH. Sn-glycerol 3-phosphate-binding residues include Lys-208, Asp-261, Ser-271, Arg-272, and Asn-273. Catalysis depends on Lys-208, which acts as the Proton acceptor. Position 272 (Arg-272) interacts with NADPH. Glu-297 provides a ligand contact to NADPH.

It belongs to the NAD-dependent glycerol-3-phosphate dehydrogenase family.

It localises to the cytoplasm. The catalysed reaction is sn-glycerol 3-phosphate + NAD(+) = dihydroxyacetone phosphate + NADH + H(+). It carries out the reaction sn-glycerol 3-phosphate + NADP(+) = dihydroxyacetone phosphate + NADPH + H(+). It participates in membrane lipid metabolism; glycerophospholipid metabolism. Its function is as follows. Catalyzes the reduction of the glycolytic intermediate dihydroxyacetone phosphate (DHAP) to sn-glycerol 3-phosphate (G3P), the key precursor for phospholipid synthesis. This chain is Glycerol-3-phosphate dehydrogenase [NAD(P)+], found in Bordetella bronchiseptica (strain ATCC BAA-588 / NCTC 13252 / RB50) (Alcaligenes bronchisepticus).